Reading from the N-terminus, the 313-residue chain is E3 ubiquitin-protein ligase RNF126 (313 aa).

Alanine 2 is subject to N-acetylalanine. Serine 5 carries the phosphoserine modification. The tract at residues 5–100 (SPQPGRYFCH…FEIPTFPPGA (96 aa)) is required for interaction with BAG6. Zn(2+) contacts are provided by cysteine 13, cysteine 16, cysteine 29, and cysteine 32. The C4-type zinc-finger motif lies at 13 to 32 (CHCCSVEIVPRLPDYICPRC). Disordered stretches follow at residues 42–63 (EETR…QNRQ) and 95–128 (TFPP…RQPR). Residues 47 to 63 (TENGSAPSTAPTDQNRQ) are compositionally biased toward polar residues. The span at 103–116 (DDGRDPESRREREH) shows a compositional bias: basic and acidic residues. Residues 117-128 (QSRHRYGARQPR) are compositionally biased toward basic residues. The interval 202-306 (TGPPPADKEK…SSSSSSSPSN (105 aa)) is sufficient for interaction with AICDA. The segment at 231 to 272 (CPVCKEDYALGESVRQLPCNHLFHDSCIVPWLEQHDSCPVCR) adopts an RING-type zinc-finger fold. The disordered stretch occupies residues 279–313 (NTATNPPGLTGVGFSSSSSSSSSSSPSNENATSNS). Over residues 293–313 (SSSSSSSSSSSPSNENATSNS) the composition is skewed to low complexity.

In terms of assembly, interacts with CCDC50, EGFR, FLT3 and SCAMP3. Interacts with BAG6 (via ubiquitin-like domain); required for BAG6-dependent ubiquitination of proteins mislocalized to the cytosol. Interacts with CDKN1A. Interacts with AICDA. Post-translationally, ubiquitinated. May undergo autoubiquitination. In terms of tissue distribution, detected in B-cells (at protein level).

The protein resides in the cytoplasm. It is found in the nucleus. It catalyses the reaction S-ubiquitinyl-[E2 ubiquitin-conjugating enzyme]-L-cysteine + [acceptor protein]-L-lysine = [E2 ubiquitin-conjugating enzyme]-L-cysteine + N(6)-ubiquitinyl-[acceptor protein]-L-lysine.. Its pathway is protein modification; protein ubiquitination. Its function is as follows. E3 ubiquitin-protein ligase that mediates ubiquitination oF target proteins. Depending on the associated E2 ligase, mediates 'Lys-27'-, 'Lys-29'-, 'Lys-48'- and/or 'Lys-63'-linked polyubiquitination of substrates. Part of a BAG6-dependent quality control process ensuring that proteins of the secretory pathway that are mislocalized to the cytosol are degraded by the proteasome. Probably acts by providing the ubiquitin ligase activity associated with the BAG6 complex and be responsible for ubiquitination of the hydrophobic mislocalized proteins and their targeting to the proteasome. May also play a role in the endosomal recycling of IGF2R, the cation-independent mannose-6-phosphate receptor. May play a role in the endosomal sorting and degradation of several membrane receptors including EGFR, FLT3, MET and CXCR4, by mediating their ubiquitination. By ubiquitinating CDKN1A/p21 and targeting it for degradation, may also promote cell proliferation. May monoubiquitinate AICDA. Acts as a regulator of DNA repair by mediating 'Lys-27'- and 'Lys-29'-linked polyubiquitination of MRE11, thereby promoting the exonuclease activity of MRE11. In Mus musculus (Mouse), this protein is E3 ubiquitin-protein ligase RNF126.